The primary structure comprises 258 residues: Phosphate import ATP-binding protein PstB (258 aa).

In terms of domain architecture, ABC transporter spans 13–253; sequence IKIENLNLWY…PREKSTEDYI (241 aa). 45–52 contacts ATP; that stretch reads GPSGCGKS.

It belongs to the ABC transporter superfamily. Phosphate importer (TC 3.A.1.7) family. As to quaternary structure, the complex is composed of two ATP-binding proteins (PstB), two transmembrane proteins (PstC and PstA) and a solute-binding protein (PstS).

It localises to the cell membrane. It carries out the reaction phosphate(out) + ATP + H2O = ADP + 2 phosphate(in) + H(+). Functionally, part of the ABC transporter complex PstSACB involved in phosphate import. Responsible for energy coupling to the transport system. This is Phosphate import ATP-binding protein PstB from Methanosarcina barkeri (strain Fusaro / DSM 804).